We begin with the raw amino-acid sequence, 326 residues long: Aspartate carbamoyltransferase catalytic subunit (326 aa).

Arg-58 and Thr-59 together coordinate carbamoyl phosphate. Position 86 (Lys-86) interacts with L-aspartate. Arg-108, His-141, and Gln-144 together coordinate carbamoyl phosphate. Positions 181 and 239 each coordinate L-aspartate. The carbamoyl phosphate site is built by Gly-280 and Pro-281.

Belongs to the aspartate/ornithine carbamoyltransferase superfamily. ATCase family. Heterododecamer (2C3:3R2) of six catalytic PyrB chains organized as two trimers (C3), and six regulatory PyrI chains organized as three dimers (R2).

The enzyme catalyses carbamoyl phosphate + L-aspartate = N-carbamoyl-L-aspartate + phosphate + H(+). It functions in the pathway pyrimidine metabolism; UMP biosynthesis via de novo pathway; (S)-dihydroorotate from bicarbonate: step 2/3. Catalyzes the condensation of carbamoyl phosphate and aspartate to form carbamoyl aspartate and inorganic phosphate, the committed step in the de novo pyrimidine nucleotide biosynthesis pathway. This Synechococcus sp. (strain JA-2-3B'a(2-13)) (Cyanobacteria bacterium Yellowstone B-Prime) protein is Aspartate carbamoyltransferase catalytic subunit.